Here is a 319-residue protein sequence, read N- to C-terminus: Curved DNA-binding protein (319 aa).

One can recognise a J domain in the interval 5–69 (DYYKILGVEP…QKRAEFDEIR (65 aa)).

Its subcellular location is the cytoplasm. It is found in the nucleoid. In terms of biological role, DNA-binding protein that preferentially recognizes a curved DNA sequence. It is probably a functional analog of DnaJ; displays overlapping activities with DnaJ, but functions under different conditions, probably acting as a molecular chaperone in an adaptive response to environmental stresses other than heat shock. Lacks autonomous chaperone activity; binds native substrates and targets them for recognition by DnaK. Its activity is inhibited by the binding of CbpM. The chain is Curved DNA-binding protein from Pseudomonas putida (strain ATCC 700007 / DSM 6899 / JCM 31910 / BCRC 17059 / LMG 24140 / F1).